The primary structure comprises 729 residues: MGPLLRSSPPPRHLRLLLRRLLSTAAGRPSRLLPLPASSSARLLVRPRVAVAAAAAGAPLRRNGVAVRAFMASTAASEAMQEKRVAGEYTAANVQVLEALDGVRTRPGMYIGSTGSRGLHHLVYEILDNAVDEAQAGYATKVDVILHGDNSVSVTDNGRGIPTDIHPQTKKSCVETVLTLMHAGGKFGGSKSGYTVSGGLHGVGLSVVNALSEALEVTVWRDGKEYRQNYSRGKAITMLTSRTLSDESSSRQGTRIRFWPDKHIFTTTMDFDFNTIAGRIRELAFLNPELTIALTKEEDDLQVQHNEYCYAGGLVEYVKWLNTDKKSLHDPIAFRKEMDGITVDVSLQWCSDSYSDTVLGYANSIRTIDGGTHIDGLKTSLTRTINNFAKKSKTLKDKDISLSGEHVREGMTCIIAVKVPNPEFEGQTKTRLGNPEVRRIVEQSVQENLTEYLELHPDVLDSILSKSLNALKAALAAKRARELVRTKSVLKSSSLPGKLADCASSDPEESEIFIVEGDSAGGSAKQGRDRKFQAILPLRGKILNIERRDEAALYKNEEIQNLIVALGLGVKGEDFNKEALRYHKIVILTDADVDGAHIRTLLLTFFFRYQKALFDEGCIYVGVPPLYKVERGKQAHYCYDDADLKELVNTFPTNASYHIQRFKGLGEMMPAQLWETTMDPERRMLKQLKVEDAAEANVVFSSLMGTRVDVRKQLIQNAASMVNLEHLDI.

The Toprim domain maps to 510-617 (SEIFIVEGDS…RYQKALFDEG (108 aa)). Residues E516, D590, and D592 each coordinate Mg(2+).

Belongs to the type II topoisomerase GyrB family. As to quaternary structure, made up of two chains. The A chain is responsible for DNA breakage and rejoining; the B chain catalyzes ATP hydrolysis. Requires Mg(2+) as cofactor. The cofactor is Mn(2+). Ca(2+) serves as cofactor.

The protein localises to the plastid. It is found in the chloroplast. The protein resides in the mitochondrion. The enzyme catalyses ATP-dependent breakage, passage and rejoining of double-stranded DNA.. A type II topoisomerase that negatively supercoils closed circular double-stranded DNA in an ATP-dependent manner. The sequence is that of DNA gyrase subunit B, chloroplastic/mitochondrial (GYRB) from Oryza sativa subsp. japonica (Rice).